A 232-amino-acid polypeptide reads, in one-letter code: Clarin-1 (232 aa).

The helical transmembrane segment at 8 to 28 threads the bilayer; that stretch reads IIFCMAGVFSFACALGVVTAL. Asn48 carries N-linked (GlcNAc...) asparagine glycosylation. 2 helical membrane-spanning segments follow: residues 101–121 and 135–155; these read IILF…FFMY and LGLY…MILF. Asn184 carries N-linked (GlcNAc...) asparagine glycosylation. The helical transmembrane segment at 186-206 threads the bilayer; the sequence is TTSFWVVFICFFVHFLNGLLI.

Belongs to the clarin family.

The protein localises to the cell membrane. Its function is as follows. May have a role in the excitatory ribbon synapse junctions between hair cells and cochlear ganglion cells and presumably also in analogous synapses within the retina. This is Clarin-1 (Clrn1) from Rattus norvegicus (Rat).